The following is a 96-amino-acid chain: Small ribosomal subunit protein bS21 (96 aa).

Residues 52-96 (RRARKQARKTAIREGLIAAPKPKARPVSPRRPAAPAPASSPVGAA) are disordered. Residues 69-96 (AAPKPKARPVSPRRPAAPAPASSPVGAA) show a composition bias toward low complexity.

This sequence belongs to the bacterial ribosomal protein bS21 family.

The chain is Small ribosomal subunit protein bS21 from Methylobacterium nodulans (strain LMG 21967 / CNCM I-2342 / ORS 2060).